The sequence spans 718 residues: Cyclic-di-AMP phosphodiesterase PgpH (718 aa).

At 1-17 the chain is on the cytoplasmic side; sequence MKLAKKWRDWYIESGKK. The helical transmembrane segment at 18-38 threads the bilayer; sequence YLFPLLLVCFAVIAYFLVCQM. The Extracellular segment spans residues 39 to 289; it reads TKPESYNVKL…MLHLLDQKMP (251 aa). Over residues 112-127 the composition is skewed to basic and acidic residues; the sequence is QEKDTKNKEKAKKENK. The disordered stretch occupies residues 112–140; the sequence is QEKDTKNKEKAKKENKPAPAPTSTEDKLK. The helical transmembrane segment at 290–310 threads the bilayer; sequence VKQYAGFAIFIIALAAILFLY. Over 311–324 the chain is Cytoplasmic; that stretch reads TKKQTQPKAKKMQT. Residues 325 to 345 form a helical membrane-spanning segment; sequence MLIFSSVYLVSLFMLFIILFL. Residues 346-349 are Extracellular-facing; the sequence is ETQN. 2 helical membrane passes run 350–370 and 371–391; these read IANI…KILL and NEKY…LTFQ. Residue Asn392 is a topological domain, extracellular. A helical membrane pass occupies residues 393–413; sequence DATSGITIFILLSGATSVVML. Over 414 to 421 the chain is Cytoplasmic; sequence RDYSRRSA. Residues 422 to 442 form a helical membrane-spanning segment; that stretch reads IMLSGFMVGLINMIYVLLLLL. Residues 443 to 457 are Extracellular-facing; that stretch reads INNSTLLQVSTLMAL. Residues 458–478 form a helical membrane-spanning segment; that stretch reads GYAFLGGFGAFILGVGVIPLF. The Cytoplasmic segment spans residues 479–718; that stretch reads ETIFGLLTTS…QRIQYPDDKD (240 aa). Residues 511-653 enclose the HD domain; the sequence is TYHHSMMVAN…INISDSVEAA (143 aa). Mn(2+) is bound by residues His514, His543, and Asp544. Residue His514 coordinates substrate. Residues 544-547 and 555-556 contribute to the substrate site; these read DIGK and VE. Residues His580, His604, and His605 each coordinate Mn(2+). Substrate is bound by residues Tyr631 and Asp648. A Mn(2+)-binding site is contributed by Asp648.

This sequence belongs to the PgpH phosphodiesterase family. The cofactor is Mn(2+).

The protein localises to the cell membrane. The catalysed reaction is 3',3'-c-di-AMP + H2O = 5'-O-phosphonoadenylyl-(3'-&gt;5')-adenosine + H(+). Its activity is regulated as follows. c-di-AMP hydrolysis inhibited by ppGpp, without altering c-di-AMP binding. In terms of biological role, a phosphodiesterase (PDE) that hydrolyzes cyclic di-3',5'-adenylate (c-di-AMP); there are at least 2 PDEs for c-di-AMP in this bacteria (this and pdeA), this may be the major PDE for growth in liquid culture. During host infection c-di-AMP is secreted into the host cytoplasm which leads to interferon-beta production and secretion by the host. The cytoplasmic HD domain binds and hydrolyzes c-di-AMP to 5'-pApA; has very low activity against c-di-GMP, does not hydrolyze ppGpp. The polypeptide is Cyclic-di-AMP phosphodiesterase PgpH (Listeria monocytogenes serotype 1/2a (strain 10403S)).